The following is a 219-amino-acid chain: Polysialic acid transport ATP-binding protein KpsT (219 aa).

The ABC transporter domain occupies 2–218; the sequence is IKIENLTKSY…TEAIADYKKD (217 aa). 38–45 contacts ATP; sequence GQNGAGKS.

This sequence belongs to the ABC transporter superfamily.

It is found in the cell inner membrane. Its function is as follows. Putative ATP-binding protein, and an energy coupling component for the transport of polysialic acid across the cytoplasmic membrane. The chain is Polysialic acid transport ATP-binding protein KpsT (kpsT) from Escherichia coli.